A 446-amino-acid polypeptide reads, in one-letter code: N-succinylarginine dihydrolase 2 (446 aa).

Substrate-binding positions include 20–29, N111, and 138–139; these read VGLSPGNLAS and HR. Residue E175 is part of the active site. R212 provides a ligand contact to substrate. H246 is an active-site residue. Substrate contacts are provided by D248 and N361. The active-site Nucleophile is the C367.

The protein belongs to the succinylarginine dihydrolase family. As to quaternary structure, homodimer.

It catalyses the reaction N(2)-succinyl-L-arginine + 2 H2O + 2 H(+) = N(2)-succinyl-L-ornithine + 2 NH4(+) + CO2. Its pathway is amino-acid degradation; L-arginine degradation via AST pathway; L-glutamate and succinate from L-arginine: step 2/5. Catalyzes the hydrolysis of N(2)-succinylarginine into N(2)-succinylornithine, ammonia and CO(2). This chain is N-succinylarginine dihydrolase 2, found in Caulobacter vibrioides (strain ATCC 19089 / CIP 103742 / CB 15) (Caulobacter crescentus).